Consider the following 318-residue polypeptide: Transcriptional regulator NovG (318 aa).

Residues 146-156 (VASLRSSSTAG) show a composition bias toward polar residues. A disordered region spans residues 146 to 176 (VASLRSSSTAGTVGRRTGQDGRSRPNDGTDG). Residues 162-176 (TGQDGRSRPNDGTDG) are compositionally biased toward basic and acidic residues.

It belongs to the ParB family.

Functionally, transcription regulator that specifically activates expression of genes involved in the novobiocin biosynthesis pathway. Binds 5'-GTTCRACTG(N)(11)CRGTYGAAC-3' DNA sequence. The polypeptide is Transcriptional regulator NovG (novG) (Streptomyces niveus (Streptomyces spheroides)).